A 68-amino-acid polypeptide reads, in one-letter code: Erythrodihydroneopterin triphosphate synthetase (68 aa).

Position 66 is a phosphoserine (serine 66).

The chain is Erythrodihydroneopterin triphosphate synthetase from Cavia porcellus (Guinea pig).